The primary structure comprises 137 residues: MLQPSNRKYRKDFKGRNRGVASRGNRVSFGEFGLKATECARITARQLEAARRTIARHIKRGGKITIRIFPDKPITKKPLEVRQGKGKGSVEYWVALVQPGRMIFEIEGVDEALAREAFSRAAAKLPLKCLFVKRTVM.

Residues 1-20 (MLQPSNRKYRKDFKGRNRGV) are disordered. Residues 7 to 17 (RKYRKDFKGRN) show a composition bias toward basic residues.

The protein belongs to the universal ribosomal protein uL16 family. In terms of assembly, part of the 50S ribosomal subunit.

Its function is as follows. Binds 23S rRNA and is also seen to make contacts with the A and possibly P site tRNAs. The chain is Large ribosomal subunit protein uL16 from Coxiella burnetii (strain CbuG_Q212) (Coxiella burnetii (strain Q212)).